A 75-amino-acid chain; its full sequence is Small capsomere-interacting protein (75 aa).

Belongs to the herpesviridae small capsomere-interacting protein family. As to quaternary structure, interacts with the major capsid protein/MCP.

It localises to the virion. The protein resides in the host nucleus. In terms of biological role, participates in the assembly of the infectious particles by decorating the outer surface of the capsid shell and thus forming a layer between the capsid and the tegument. Complexes composed of the capsid protein VP5 and UL48A assemble together in the host cytoplasm and are translocated to the nucleus, where they accumulate and participate in capsid assembly. Its function is as follows. Participates in the assembly of the infectious particles by decorating the outer surface of the capsid shell and thus forming a layer between the capsid and the tegument. Complexes composed of the major capsid protein and small capsomere-interacting protein/SCP assemble together in the host cytoplasm and are translocated to the nucleus, where they accumulate and participate in capsid assembly. This chain is Small capsomere-interacting protein, found in Homo sapiens (Human).